The sequence spans 507 residues: Hippocampus abundant transcript-like protein 1 (507 aa).

Positions 1–22 are disordered; that stretch reads MSTDGESPEEPGWKAVASPKAS. Over 1–51 the chain is Extracellular; it reads MSTDGESPEEPGWKAVASPKASAMPEKRGSAQAASSSWLQGFGQPSVYHAA. The chain crosses the membrane as a helical span at residues 52-72; it reads FVIFFEFFAWGLLTTPMLTVL. Topologically, residues 73–84 are cytoplasmic; that stretch reads HETFPQHTFLMN. A helical membrane pass occupies residues 85 to 105; the sequence is GLIQGVKGLLSFLSAPLIGAL. The Extracellular portion of the chain corresponds to 106-113; that stretch reads SDVWGRKP. A helical transmembrane segment spans residues 114-134; the sequence is FLLGTVFFTCFPIPLMRISPW. Residues 135 to 136 lie on the Cytoplasmic side of the membrane; sequence WY. A helical membrane pass occupies residues 137-157; sequence FGMISVSGVFSVTFSVIFAYV. Residues 158-170 lie on the Extracellular side of the membrane; sequence ADFTQEHERSTAY. The helical transmembrane segment at 171-191 threads the bilayer; the sequence is GWVSATFAASLVSSPAIGTYL. The Cytoplasmic portion of the chain corresponds to 192-198; that stretch reads SSNYGDS. A helical membrane pass occupies residues 199–219; that stretch reads LVVLVATVVALLDICFILVAV. At 220–257 the chain is on the extracellular side; it reads PESLPEKIRPASWGAQISWKQADPFASLKKVGKDSTVL. A helical membrane pass occupies residues 258-278; sequence LICITVFLSYLPEAGQYSSFF. Residues 279–283 are Cytoplasmic-facing; that stretch reads LYLRQ. The helical transmembrane segment at 284-304 threads the bilayer; that stretch reads VIGFGSVKIVAFIAMVGILSI. The Extracellular segment spans residues 305-323; sequence LAQTVFLSKLMRSLGNKNT. The helical transmembrane segment at 324-344 threads the bilayer; sequence VLLGLGFQILQLAWYGFGAQA. At 345-347 the chain is on the cytoplasmic side; sequence WMM. A helical transmembrane segment spans residues 348–368; the sequence is WAAGTVAAMSSITFPAVSALI. The Extracellular segment spans residues 369-389; sequence SRNAESDQQGVAQGIITGIRG. A helical transmembrane segment spans residues 390 to 410; the sequence is LCNGLGPALYGFIFYLFHVEL. The Cytoplasmic portion of the chain corresponds to 411 to 430; that stretch reads NELGPKLDSDNDPLQGAFIP. Residues 431 to 451 form a helical membrane-spanning segment; that stretch reads GPPFLFGACIVLMSFLVALFI. The Extracellular portion of the chain corresponds to 452–507; the sequence is PEYRKTGGVQKHNNSISGSLSTPPERGSDEDIEPLLQDSNIWELSSEEPGNQCTEL. Over residues 462–473 the composition is skewed to polar residues; sequence KHNNSISGSLST. Residues 462-483 are disordered; the sequence is KHNNSISGSLSTPPERGSDEDI. Asn-464 is a glycosylation site (N-linked (GlcNAc...) asparagine).

This sequence belongs to the major facilitator superfamily.

It localises to the membrane. This is Hippocampus abundant transcript-like protein 1 from Rattus norvegicus (Rat).